A 67-amino-acid chain; its full sequence is Putative sodium channel alpha-toxin Acra5 (67 aa).

An LCN-type CS-alpha/beta domain is found at 2 to 65; it reads RDGYIMIKDT…VYGDRGVICR (64 aa). Cystine bridges form between cysteine 13/cysteine 64, cysteine 17/cysteine 40, cysteine 26/cysteine 45, and cysteine 30/cysteine 47. Residue arginine 67 is a propeptide, removed by a carboxypeptidase.

It belongs to the long (4 C-C) scorpion toxin superfamily. Sodium channel inhibitor family. Alpha subfamily. In terms of tissue distribution, expressed by the venom gland.

It is found in the secreted. Its function is as follows. Alpha toxins bind voltage-independently at site-3 of sodium channels (Nav) and inhibit the inactivation of the activated channels, thereby blocking neuronal transmission. This chain is Putative sodium channel alpha-toxin Acra5, found in Androctonus crassicauda (Arabian fat-tailed scorpion).